A 116-amino-acid polypeptide reads, in one-letter code: Iron-sulfur cluster insertion protein ErpA (116 aa).

Residues Cys44, Cys108, and Cys110 each coordinate iron-sulfur cluster.

It belongs to the HesB/IscA family. As to quaternary structure, homodimer. It depends on iron-sulfur cluster as a cofactor.

Required for insertion of 4Fe-4S clusters for at least IspG. This chain is Iron-sulfur cluster insertion protein ErpA, found in Francisella philomiragia subsp. philomiragia (strain ATCC 25017 / CCUG 19701 / FSC 153 / O#319-036).